The sequence spans 393 residues: SET domain-containing protein DDB_G0283443 (393 aa).

An SET domain is found at 17–312 (KKIEINETLE…KGDELSISYI (296 aa)).

Belongs to the class V-like SAM-binding methyltransferase superfamily.

In terms of biological role, probable methyltransferase. The chain is SET domain-containing protein DDB_G0283443 from Dictyostelium discoideum (Social amoeba).